A 356-amino-acid polypeptide reads, in one-letter code: MQMTFRWYGDSDPVTLEYIRQIPGVTGIVSAIYDIPVGEAWPYEKIVELKEKIENHGLSLSVIESVPVHEDIKLGLPTRDQYIENYKTTIRNLAKAGVKIVCYNFMPVFDWTRSSLDYALEDGSTALIYEEEKVRQMNPLHGELKLPGWDTSYEDGQLKNLFQQYQHMTEEDLWENLSYFIKAVIPAAENEQVKMAIHPDDPPWPIFGLPRIITNKENLERLIHLYDSSFNGLCLCSGSLGVKSTNDIPELIRYFGKKGKVNFVHLRNIKIIGEKSFQESSHRSEDGSLDMYEIVRALRDIDFAGPARPDHGRMIWGETGKPGYGLYDRALGAVYLNGMWETLTKEKKRIALECNK.

This sequence belongs to the mannonate dehydratase family. Requires Fe(2+) as cofactor. It depends on Mn(2+) as a cofactor.

It catalyses the reaction D-mannonate = 2-dehydro-3-deoxy-D-gluconate + H2O. It functions in the pathway carbohydrate metabolism; pentose and glucuronate interconversion. Catalyzes the dehydration of D-mannonate. In Bacillus licheniformis (strain ATCC 14580 / DSM 13 / JCM 2505 / CCUG 7422 / NBRC 12200 / NCIMB 9375 / NCTC 10341 / NRRL NRS-1264 / Gibson 46), this protein is Mannonate dehydratase 2.